We begin with the raw amino-acid sequence, 98 residues long: Ubiquitin-related modifier 1 (98 aa).

Gly-98 bears the 1-thioglycine mark. Residue Gly-98 forms a Glycyl lysine isopeptide (Gly-Lys) (interchain with K-? in acceptor proteins) linkage.

The protein belongs to the URM1 family. C-terminal thiocarboxylation occurs in 2 steps, it is first acyl-adenylated (-COAMP) via the hesA/moeB/thiF part of UBA4, then thiocarboxylated (-COSH) via the rhodanese domain of UBA4.

The protein localises to the cytoplasm. The protein operates within tRNA modification; 5-methoxycarbonylmethyl-2-thiouridine-tRNA biosynthesis. Acts as a sulfur carrier required for 2-thiolation of mcm(5)S(2)U at tRNA wobble positions of cytosolic tRNA(Lys), tRNA(Glu) and tRNA(Gln). Serves as sulfur donor in tRNA 2-thiolation reaction by being thiocarboxylated (-COSH) at its C-terminus by the MOCS3 homolog UBA4. The sulfur is then transferred to tRNA to form 2-thiolation of mcm(5)S(2)U. Prior mcm(5) tRNA modification by the elongator complex is required for 2-thiolation. Also acts as a ubiquitin-like protein (UBL) that is covalently conjugated via an isopeptide bond to lysine residues of target proteins such as AHP1. The thiocarboxylated form serves as substrate for conjugation and oxidative stress specifically induces the formation of UBL-protein conjugates. The polypeptide is Ubiquitin-related modifier 1 (Candida glabrata (strain ATCC 2001 / BCRC 20586 / JCM 3761 / NBRC 0622 / NRRL Y-65 / CBS 138) (Yeast)).